The following is a 252-amino-acid chain: Probable S-methyl-5'-thioinosine phosphorylase (252 aa).

Phosphate contacts are provided by residues T8 and 44–45; that span reads RH. M173 is a substrate binding site. T174 is a binding site for phosphate. 197 to 199 serves as a coordination point for substrate; sequence NYA.

Belongs to the PNP/MTAP phosphorylase family. MTAP subfamily. In terms of assembly, homotrimer.

It carries out the reaction S-methyl-5'-thioinosine + phosphate = 5-(methylsulfanyl)-alpha-D-ribose 1-phosphate + hypoxanthine. It participates in purine metabolism; purine nucleoside salvage. In terms of biological role, catalyzes the reversible phosphorylation of S-methyl-5'-thioinosine (MTI) to hypoxanthine and 5-methylthioribose-1-phosphate. Involved in the breakdown of S-methyl-5'-thioadenosine (MTA), a major by-product of polyamine biosynthesis. Catabolism of (MTA) occurs via deamination to MTI and phosphorolysis to hypoxanthine. This Methanocaldococcus jannaschii (strain ATCC 43067 / DSM 2661 / JAL-1 / JCM 10045 / NBRC 100440) (Methanococcus jannaschii) protein is Probable S-methyl-5'-thioinosine phosphorylase.